Reading from the N-terminus, the 332-residue chain is 2,3-diketo-L-gulonate reductase (332 aa).

The active-site Proton donor is the H44. NAD(+) contacts are provided by residues 168 to 174 (ITMVDMS), 224 to 225 (WK), and 304 to 306 (GHE).

Belongs to the LDH2/MDH2 oxidoreductase family. DlgD subfamily. In terms of assembly, homodimer.

Its subcellular location is the cytoplasm. It carries out the reaction 3-dehydro-L-gulonate + NAD(+) = 2,3-dioxo-L-gulonate + NADH + H(+). The enzyme catalyses 3-dehydro-L-gulonate + NADP(+) = 2,3-dioxo-L-gulonate + NADPH + H(+). Catalyzes the reduction of 2,3-diketo-L-gulonate in the presence of NADH, to form 3-keto-L-gulonate. The chain is 2,3-diketo-L-gulonate reductase from Escherichia coli O1:K1 / APEC.